The following is a 202-amino-acid chain: Nigerythrin (202 aa).

Residues 23 to 168 form the Ferritin-like diiron domain; that stretch reads KTAVGSTLEN…AYNDIDAPDD (146 aa). Residues E40, E73, E115, E118, E149, H152, C174, C177, C189, and C192 each coordinate Fe cation. Positions 169–202 constitute a Rubredoxin-like domain; sequence DKFHLCPICGYIHKGEDFEKCPICFRPKDTFTAY.

In terms of assembly, homodimer. May possess two rubredoxin-like centers and two hemerythrin-like binuclear-iron centers per dimer.

The protein localises to the cytoplasm. In terms of biological role, exhibits NADH peroxidase activity (in vitro). In Nitratidesulfovibrio vulgaris (strain ATCC 29579 / DSM 644 / CCUG 34227 / NCIMB 8303 / VKM B-1760 / Hildenborough) (Desulfovibrio vulgaris), this protein is Nigerythrin (ngr).